The primary structure comprises 1640 residues: Phospholipase D C (1640 aa).

Over residues 122–132 the composition is skewed to polar residues; it reads SHRSNQSFNHS. Disordered stretches follow at residues 122-247, 264-283, 439-499, and 521-541; these read SHRS…KRLS, HNQNHQNHQNHQNHHHHTTT, EKQQ…YKYN, and DDEYYYGEYDDEDDSKPPSQE. Low complexity predominate over residues 133–193; sequence NSTTPLNTTN…YSSDNSYLHN (61 aa). The segment covering 197 to 231 has biased composition (acidic residues); the sequence is DIYEDEDDEDDEDDDDDEDEDDEGKEFEQDDEDES. Over residues 232–247 the composition is skewed to polar residues; sequence TISSMSLKNSQAKRLS. Composition is skewed to low complexity over residues 264-273 and 467-499; these read HNQNHQNHQN and TTTTATTNNNNNNNNNNNNNNNNNNNNNSYKYN. A compositionally biased stretch (acidic residues) spans 521–534; it reads DDEYYYGEYDDEDD. A PLD phosphodiesterase 1 domain is found at 1009 to 1036; the sequence is LYWSHHQKVVVVDQRIAFIGGLDLCFGR. Residues His1014, Lys1016, and Asp1021 contribute to the active site. Low complexity-rich tracts occupy residues 1149-1274 and 1282-1296; these read INNN…NNLN and HNNSLPHQLNNQQQQ. The segment at 1149–1315 is disordered; sequence INNNNNNANN…YQPPLPPQQR (167 aa). A compositionally biased stretch (basic residues) spans 1297–1306; sequence QHHHHHHHHY. One can recognise a PLD phosphodiesterase 2 domain in the interval 1460-1487; it reads EQIYVHSKVLIVDDKIAIIGSANINDRS. Active-site residues include His1465, Lys1467, and Asp1472.

The protein belongs to the phospholipase D family.

The catalysed reaction is a 1,2-diacyl-sn-glycero-3-phosphocholine + H2O = a 1,2-diacyl-sn-glycero-3-phosphate + choline + H(+). Its activity is regulated as follows. Inhibited by butan-1-ol. In terms of biological role, plays a role in cell growth. Hydrolyzes membrane phospholipids, such as PtdCho (phosphatidylcholine), producing the free headgroup and PtdOH (phosphatidic acid; signaling molecule on its own). Involved in the inhibition of actin-based motility and endocytosis. Its inhibition causes complete collapse of F-actin organization. The sequence is that of Phospholipase D C (pldC) from Dictyostelium discoideum (Social amoeba).